Reading from the N-terminus, the 224-residue chain is Menaquinol:cytochrome c reductase cytochrome b subunit (224 aa).

Residues 37-57 traverse the membrane as a helical segment; it reads FSAFVYCFGGLTFFVTVIQIL. Residue tyrosine 42 coordinates heme b. Cysteine 43 is a heme c binding site. Arginine 91, histidine 94, histidine 108, and arginine 111 together coordinate heme b. The next 3 helical transmembrane spans lie at 96–116, 126–146, and 195–215; these read WGAS…FFQG, WIVG…GYLL, and IHVF…FLMI. Heme b is bound by residues histidine 196 and histidine 211. Residues arginine 216 and isoleucine 220 each coordinate heme c. Residue serine 221 coordinates heme b.

Belongs to the cytochrome b family. The main subunits of the menaquinol:cytochrome c complex are a Rieske-type iron-sulfur protein (QcrA), a cytochrome b (QcrB) and a cytochrome c (QcrC). Requires heme b as cofactor. The cofactor is heme c.

The protein resides in the cell membrane. Functionally, component of the menaquinol:cytochrome c reductase complex. This is Menaquinol:cytochrome c reductase cytochrome b subunit (qcrB) from Geobacillus thermodenitrificans.